The following is a 699-amino-acid chain: tRNA(Met) cytidine acetyltransferase TmcA (699 aa).

Residues glutamine 179, glycine 201–methionine 210, and arginine 323 each bind ATP. In terms of domain architecture, N-acetyltransferase spans isoleucine 359 to leucine 543. Residues valine 471 to valine 473, glutamate 511, and arginine 518 contribute to the acetyl-CoA site.

The protein belongs to the RNA cytidine acetyltransferase family. TmcA subfamily.

The protein localises to the cytoplasm. The catalysed reaction is cytidine(34) in elongator tRNA(Met) + acetyl-CoA + ATP + H2O = N(4)-acetylcytidine(34) in elongator tRNA(Met) + ADP + phosphate + CoA + H(+). Its function is as follows. Catalyzes the formation of N(4)-acetylcytidine (ac(4)C) at the wobble position of tRNA(Met), by using acetyl-CoA as an acetyl donor and ATP (or GTP). This chain is tRNA(Met) cytidine acetyltransferase TmcA, found in Yersinia pestis (strain D106004).